The chain runs to 237 residues: Eukaryotic translation initiation factor 3 subunit K (237 aa).

A PCI domain is found at 44-219 (CDCNANRALL…EARKAEIRED (176 aa)).

It belongs to the eIF-3 subunit K family. As to quaternary structure, component of the eukaryotic translation initiation factor 3 (eIF-3) complex.

It is found in the cytoplasm. Component of the eukaryotic translation initiation factor 3 (eIF-3) complex, which is involved in protein synthesis of a specialized repertoire of mRNAs and, together with other initiation factors, stimulates binding of mRNA and methionyl-tRNAi to the 40S ribosome. The eIF-3 complex specifically targets and initiates translation of a subset of mRNAs involved in cell proliferation. The protein is Eukaryotic translation initiation factor 3 subunit K of Neurospora crassa (strain ATCC 24698 / 74-OR23-1A / CBS 708.71 / DSM 1257 / FGSC 987).